The chain runs to 97 residues: Serine protease inhibitor Kazal-type 13 (97 aa).

An N-terminal signal peptide occupies residues 1–26; the sequence is MKRSGCWHQRMLLSLVLLTWTHVTFS. N33 is a glycosylation site (N-linked (GlcNAc...) asparagine). Positions 36–97 constitute a Kazal-like domain; it reads RWPKPPCKMY…IQFVKYGKCE (62 aa). 3 disulfides stabilise this stretch: C42–C78, C56–C75, and C64–C96.

The protein localises to the secreted. Its function is as follows. May be a serine protease inhibitor. Essential for sperm maturation and fertility. Inhibits sperm acrosome reaction, protecting sperm from premature reaction. This Mus musculus (Mouse) protein is Serine protease inhibitor Kazal-type 13 (Spink13).